A 186-amino-acid polypeptide reads, in one-letter code: ADP-ribosylation factor-like protein DDB_G0292332 (186 aa).

GTP-binding positions include 24 to 31, 78 to 82, and 138 to 141; these read GVENVGKT, DIGGK, and NKQD.

The protein belongs to the small GTPase superfamily. Arf family.

Binds and exchanges GTP and GDP. The protein is ADP-ribosylation factor-like protein DDB_G0292332 of Dictyostelium discoideum (Social amoeba).